The primary structure comprises 433 residues: Acetyl-CoA acetyltransferase erg10A, mitochondrial (433 aa).

Residues 1–34 (MAIQTTTGLAARLVAKRATFPASRRNFSASRSAL) constitute a mitochondrion transit peptide. The active-site Acyl-thioester intermediate is the Cys124. Position 219 (Tyr219) interacts with K(+). CoA-binding residues include Asn229 and Lys262. A K(+)-binding site is contributed by Ala280. Ser284 is a CoA binding site. Catalysis depends on proton acceptor residues His387 and Cys415. Asn416 is a binding site for chloride.

The protein belongs to the thiolase-like superfamily. Thiolase family. In terms of assembly, homotetramer. K(+) is required as a cofactor.

It is found in the mitochondrion. It carries out the reaction 2 acetyl-CoA = acetoacetyl-CoA + CoA. Its pathway is metabolic intermediate biosynthesis; (R)-mevalonate biosynthesis; (R)-mevalonate from acetyl-CoA: step 1/3. Functionally, mitochondrial acetyl-CoA acetyltransferase that catalyzes both the formation and degradation of acetoacetyl-CoA. Has no overlapping function with erg10B and seems not to be involved in ergosterol biosynthesis. Plays an important role in growth, morphogenesis and maintaining mitochondrial function including the response to oxidative stresses. In Aspergillus fumigatus (strain ATCC MYA-4609 / CBS 101355 / FGSC A1100 / Af293) (Neosartorya fumigata), this protein is Acetyl-CoA acetyltransferase erg10A, mitochondrial.